Here is a 100-residue protein sequence, read N- to C-terminus: uncharacterized protein (100 aa).

Transmembrane regions (helical) follow at residues 17–37 (IIIL…SVSF) and 78–98 (MVDK…TIPF).

It is found in the endoplasmic reticulum membrane. This is an uncharacterized protein from Saccharomyces cerevisiae (strain ATCC 204508 / S288c) (Baker's yeast).